We begin with the raw amino-acid sequence, 217 residues long: Monomethylamine corrinoid protein 1 (217 aa).

The B12-binding N-terminal domain occupies 1 to 91 (MANQEIFDKL…ELEKNKKEGE (91 aa)). The region spanning 93-217 (AGLAITFVAE…AAKVALEVMK (125 aa)) is the B12-binding domain. His-106 is a methylcob(III)alamin binding site.

As to quaternary structure, can form a complex with MtmB.

The protein operates within one-carbon metabolism; methanogenesis from methylamine. Its function is as follows. Acts as a methyl group carrier between MtmB and MtbA. The protein is Monomethylamine corrinoid protein 1 (mtmC1) of Methanosarcina barkeri.